Consider the following 243-residue polypeptide: Derlin-1.2 (243 aa).

Over 1–20 the chain is Cytoplasmic; the sequence is MSSPAEYYKSLPPISKAYGT. A helical membrane pass occupies residues 21 to 41; it reads LCFFTTVLVRLHILNPLFLYL. Over 42-54 the chain is Lumenal; the sequence is YYPRVFKKFEVWR. A helical transmembrane segment spans residues 55–75; the sequence is IFTSFFFLGPFSINFGIRLLM. The Cytoplasmic portion of the chain corresponds to 76 to 94; the sequence is IARYGVMLEKGAFDKRTAD. The chain crosses the membrane as a helical span at residues 95-115; the sequence is FLWMMIFGAISLLVLSVIPQL. Over 116–155 the chain is Lumenal; it reads NTYVLGLPMVSMLVYVWSRENPNAQINIYGILQLKAFYLP. A helical transmembrane segment spans residues 156–176; the sequence is WVMLLLDVIFGSPLMPGLLGI. At 177–243 the chain is on the cytoplasmic side; the sequence is MVGHLYYYFA…FRGRSYRLNQ (67 aa).

This sequence belongs to the derlin family. In terms of tissue distribution, expressed in roots and endosperm.

The protein resides in the endoplasmic reticulum membrane. Its function is as follows. May be involved in the degradation process of specific misfolded endoplasmic reticulum (ER) luminal proteins. The polypeptide is Derlin-1.2 (DER1.2) (Zea mays (Maize)).